The chain runs to 385 residues: S-adenosylmethionine synthase (385 aa).

ATP is bound at residue His16. Asp18 serves as a coordination point for Mg(2+). Position 44 (Glu44) interacts with K(+). 2 residues coordinate L-methionine: Glu57 and Gln100. The interval 100–110 (QSPDINQGVDR) is flexible loop. ATP is bound by residues 164–166 (DGK), 230–231 (KF), Asp239, 245–246 (RK), Ala262, and Lys266. L-methionine is bound at residue Asp239. L-methionine is bound at residue Lys270.

Belongs to the AdoMet synthase family. As to quaternary structure, homotetramer; dimer of dimers. Requires Mg(2+) as cofactor. The cofactor is K(+).

Its subcellular location is the cytoplasm. It carries out the reaction L-methionine + ATP + H2O = S-adenosyl-L-methionine + phosphate + diphosphate. The protein operates within amino-acid biosynthesis; S-adenosyl-L-methionine biosynthesis; S-adenosyl-L-methionine from L-methionine: step 1/1. Catalyzes the formation of S-adenosylmethionine (AdoMet) from methionine and ATP. The overall synthetic reaction is composed of two sequential steps, AdoMet formation and the subsequent tripolyphosphate hydrolysis which occurs prior to release of AdoMet from the enzyme. In Helicobacter pylori (strain G27), this protein is S-adenosylmethionine synthase.